Here is a 419-residue protein sequence, read N- to C-terminus: eIF5-mimic protein 2 (419 aa).

The residue at position 1 (Met-1) is an N-acetylmethionine. A compositionally biased stretch (polar residues) spans 1 to 15; sequence MNNQKQQKPTLSGQR. The segment at 1–26 is disordered; the sequence is MNNQKQQKPTLSGQRFKTRKRDEKER. The residue at position 12 (Ser-12) is a Phosphoserine. One can recognise a W2 domain in the interval 247-414; sequence NQQTIGARKE…KNAEEESESE (168 aa). Lys-368 is covalently cross-linked (Glycyl lysine isopeptide (Lys-Gly) (interchain with G-Cter in SUMO2)). Residues Ser-411 and Ser-413 each carry the phosphoserine modification.

Belongs to the BZW family.

In terms of biological role, translation initiation regulator which represses repeat-associated non-AUG (RAN) initiated translation probably by acting as a competitive inhibitor of eukaryotic translation initiation factor 5 (EIF5) function. Enhances histone H4 gene transcription but does not seem to bind DNA directly. In Pongo abelii (Sumatran orangutan), this protein is eIF5-mimic protein 2 (BZW1).